The following is a 908-amino-acid chain: Glutamate receptor ionotropic, kainate 2 (908 aa).

A signal peptide spans 1–31 (MKIISPVLSNLVFSRSIKVLLCLLWIGYSQG). Residues 32 to 561 (TTHVLRFGGI…VFSFLNPLSP (530 aa)) are Extracellular-facing. N-linked (GlcNAc...) asparagine glycans are attached at residues Asn-67, Asn-73, Asn-275, Asn-378, Asn-412, Asn-423, and Asn-430. Cys-96 and Cys-347 are oxidised to a cystine. L-glutamate is bound by residues Pro-516, Ala-518, and Arg-523. Asn-546 is a glycosylation site (N-linked (GlcNAc...) asparagine). A helical transmembrane segment spans residues 562-582 (DIWMYILLAYLGVSCVLFVIA). The Cytoplasmic segment spans residues 583 to 638 (RFSPYEWYNPHPCNPDSDVVENNFTLLNSFWFGVGALMQQGSELMPKALSTRIVGG). Residues 639–659 (IWWFFTLIIISSYTANLAAFL) traverse the membrane as a helical segment. Residues 660-819 (TVERMESPID…KEASALGVQN (160 aa)) lie on the Extracellular side of the membrane. The L-glutamate site is built by Ala-689, Thr-690, and Glu-738. A disulfide bond links Cys-750 and Cys-804. N-linked (GlcNAc...) asparagine glycosylation occurs at Asn-751. A helical membrane pass occupies residues 820 to 840 (IGGIFIVLAAGLVLSVFVAVG). Over 841–908 (EFLYKSKKNA…RRLPGKETMA (68 aa)) the chain is Cytoplasmic. Phosphoserine; by PKC is present on residues Ser-846 and Ser-868. Lys-886 is covalently cross-linked (Glycyl lysine isopeptide (Lys-Gly) (interchain with G-Cter in SUMO1)).

The protein belongs to the glutamate-gated ion channel (TC 1.A.10.1) family. GRIK2 subfamily. Homotetramer and heterotetramer with GRIK5. Tetramers may be formed by the dimerization of dimers. Assembles into a kainate-gated homomeric channel that does not bind AMPA. Can form functional heteromeric receptors with GRIK4 and GRIK5. Can form functional heteromeric receptors with GRIK3. Interacts with DLG4. Interacts with NETO2. Interacts (via C-terminus) with KLHL17 (via kelch repeats); the interaction targets GRIK2 for degradation via ubiquitin-proteasome pathway. Sumoylation mediates kainate receptor-mediated endocytosis and regulates synaptic transmission. Sumoylation is enhanced by PIAS3 and desumoylated by SENP1. Post-translationally, ubiquitinated. Ubiquitination regulates the GRIK2 levels at the synapse by leading kainate receptor degradation through proteasome. In terms of processing, phosphorylated by PKC at Ser-868 upon agonist activation, this directly enhance sumoylation. In terms of tissue distribution, highest expression is found in the olfactory lobe, piriform cortex, dentate gyrus, hippocampus, granular cell layer of the cerebellum, and in caudate-putamen.

It localises to the cell membrane. The protein resides in the postsynaptic cell membrane. The catalysed reaction is Ca(2+)(in) = Ca(2+)(out). It carries out the reaction Na(+)(in) = Na(+)(out). With respect to regulation, cold receptor activity activated by temperatures between 10-19 degrees Celsius. In terms of biological role, ionotropic glutamate receptor that functions as a cation-permeable ligand-gated ion channel, gated by L-glutamate and the glutamatergic agonist kainic acid. L-glutamate acts as an excitatory neurotransmitter at many synapses in the central nervous system. Binding of the excitatory neurotransmitter L-glutamate induces a conformation change, leading to the opening of the cation channel, and thereby converts the chemical signal to an electrical impulse. The receptor then desensitizes rapidly and enters a transient inactive state, characterized by the presence of bound agonist. Modulates cell surface expression of NETO2. In association with GRIK3, involved in presynaptic facilitation of glutamate release at hippocampal mossy fiber synapses. Functionally, independent of its ionotropic glutamate receptor activity, acts as a thermoreceptor conferring sensitivity to cold temperatures. Functions in dorsal root ganglion neurons. This chain is Glutamate receptor ionotropic, kainate 2 (Grik2), found in Rattus norvegicus (Rat).